A 519-amino-acid chain; its full sequence is NADH-quinone oxidoreductase subunit C/D (519 aa).

The interval 1-138 is NADH dehydrogenase I subunit C; the sequence is MSERIEIPAE…TNEEPVDTTQ (138 aa). The segment at 159-519 is NADH dehydrogenase I subunit D; that stretch reads DEYIINIGPQ…VDYVVPDIDR (361 aa).

This sequence in the N-terminal section; belongs to the complex I 30 kDa subunit family. It in the C-terminal section; belongs to the complex I 49 kDa subunit family. As to quaternary structure, NDH-1 is composed of 13 different subunits. Subunits NuoB, CD, E, F, and G constitute the peripheral sector of the complex.

It is found in the cell inner membrane. The catalysed reaction is a quinone + NADH + 5 H(+)(in) = a quinol + NAD(+) + 4 H(+)(out). Its function is as follows. NDH-1 shuttles electrons from NADH, via FMN and iron-sulfur (Fe-S) centers, to quinones in the respiratory chain. The immediate electron acceptor for the enzyme in this species is believed to be a menaquinone. Couples the redox reaction to proton translocation (for every two electrons transferred, four hydrogen ions are translocated across the cytoplasmic membrane), and thus conserves the redox energy in a proton gradient. This Phocaeicola vulgatus (strain ATCC 8482 / DSM 1447 / JCM 5826 / CCUG 4940 / NBRC 14291 / NCTC 11154) (Bacteroides vulgatus) protein is NADH-quinone oxidoreductase subunit C/D.